A 234-amino-acid polypeptide reads, in one-letter code: Small ribosomal subunit protein uS2 (234 aa).

It belongs to the universal ribosomal protein uS2 family.

The protein is Small ribosomal subunit protein uS2 of Prochlorococcus marinus (strain AS9601).